The primary structure comprises 179 residues: Peptide deformylase (179 aa).

2 residues coordinate Fe cation: Cys102 and His144. Glu145 is an active-site residue. His148 provides a ligand contact to Fe cation.

This sequence belongs to the polypeptide deformylase family. Requires Fe(2+) as cofactor.

The catalysed reaction is N-terminal N-formyl-L-methionyl-[peptide] + H2O = N-terminal L-methionyl-[peptide] + formate. In terms of biological role, removes the formyl group from the N-terminal Met of newly synthesized proteins. Requires at least a dipeptide for an efficient rate of reaction. N-terminal L-methionine is a prerequisite for activity but the enzyme has broad specificity at other positions. In Wolbachia sp. subsp. Drosophila simulans (strain wRi), this protein is Peptide deformylase.